The primary structure comprises 271 residues: Proteasome inhibitor PI31 subunit (271 aa).

Alanine 2 is subject to N-acetylalanine. The interval 2–150 is important for homodimerization and interaction with FBXO7; that stretch reads AGLEVLFASA…PIHEQWEKVR (149 aa). 2 positions are modified to phosphoserine: serine 153 and serine 189. Arginine 205 is modified (omega-N-methylarginine). Residue arginine 219 is modified to Asymmetric dimethylarginine. Positions 221–271 are disordered; that stretch reads LIDPSSGLPNRLPPGAVPPGARFDPFGPIGTSPSGPNPDHLPPPGYDDMYL. Omega-N-methylarginine is present on arginine 231. At serine 252 the chain carries Phosphoserine. Pro residues predominate over residues 255-265; sequence GPNPDHLPPPG.

It belongs to the proteasome inhibitor PI31 family. In terms of assembly, monomer and homodimer. Interacts with FBXO7.

It is found in the cytoplasm. Its subcellular location is the endoplasmic reticulum. In terms of biological role, plays an important role in control of proteasome function. Inhibits the hydrolysis of protein and peptide substrates by the 20S proteasome. Also inhibits the activation of the proteasome by the proteasome regulatory proteins PA700 and PA28. In Rattus norvegicus (Rat), this protein is Proteasome inhibitor PI31 subunit (Psmf1).